A 139-amino-acid polypeptide reads, in one-letter code: Large ribosomal subunit protein uL13c (139 aa).

Belongs to the universal ribosomal protein uL13 family. Part of the 50S ribosomal subunit.

The protein localises to the plastid. Its subcellular location is the chloroplast. The chain is Large ribosomal subunit protein uL13c from Trieres chinensis (Marine centric diatom).